The primary structure comprises 185 residues: Elongation factor P (185 aa).

This sequence belongs to the elongation factor P family.

It localises to the cytoplasm. Its pathway is protein biosynthesis; polypeptide chain elongation. Involved in peptide bond synthesis. Stimulates efficient translation and peptide-bond synthesis on native or reconstituted 70S ribosomes in vitro. Probably functions indirectly by altering the affinity of the ribosome for aminoacyl-tRNA, thus increasing their reactivity as acceptors for peptidyl transferase. This is Elongation factor P from Streptococcus pyogenes serotype M5 (strain Manfredo).